Consider the following 58-residue polypeptide: Large ribosomal subunit protein bL32 (58 aa).

This sequence belongs to the bacterial ribosomal protein bL32 family.

The protein is Large ribosomal subunit protein bL32 of Prochlorococcus marinus (strain MIT 9515).